Here is a 906-residue protein sequence, read N- to C-terminus: Catenin alpha-1 (906 aa).

Residue T2 is modified to N-acetylthreonine. The tract at residues 2-228 is involved in homodimerization; it reads TAVHTGNINF…PILYTASQAC (227 aa). A Glycyl lysine isopeptide (Lys-Gly) (interchain with G-Cter in SUMO2) cross-link involves residue K57. The tract at residues 97–148 is interaction with JUP and CTNNB1; it reads VRKQCDLMKSAAGEFADDPCSSVKRGNMVRAARALLSAVTRLLILADMADVY. S264, S268, S295, and S297 each carry phosphoserine. The segment at 325–394 is interaction with alpha-actinin; sequence TRDDRRERIV…AVMDHVSDSF (70 aa). T634 carries the phosphothreonine modification. Phosphoserine is present on S641. At T645 the chain carries Phosphothreonine. Phosphoserine occurs at positions 652 and 655. Position 658 is a phosphothreonine (T658). K797 is covalently cross-linked (Glycyl lysine isopeptide (Lys-Gly) (interchain with G-Cter in SUMO2)). The residue at position 851 (S851) is a Phosphoserine. Over residues 864–880 the composition is skewed to basic and acidic residues; the sequence is PEKKPLVKREKQDETQT. The interval 864 to 894 is disordered; sequence PEKKPLVKREKQDETQTKIKRASQKKHVNPV. The span at 881–891 shows a compositional bias: basic residues; it reads KIKRASQKKHV.

The protein belongs to the vinculin/alpha-catenin family. Monomer and homodimer; the monomer preferentially binds to CTNNB1 and the homodimer to actin. Component of an cadherin:catenin adhesion complex composed of at least of CDH26, beta-catenin/CTNNB1, alpha-catenin/CTNNA1 and p120 catenin/CTNND1. Possible component of an E-cadherin/ catenin adhesion complex together with E-cadherin/CDH1 and beta-catenin/CTNNB1 or gamma-catenin/JUP; the complex is located to adherens junctions. The stable association of CTNNA1 is controversial as CTNNA1 was shown not to bind to F-actin when assembled in the complex. Alternatively, the CTNNA1-containing complex may be linked to F-actin by other proteins such as LIMA1. Binds AFDN and F-actin. Interacts with ARHGAP21. Interacts with AJUBA. Interacts with LIMA1. Interacts with vinculin/VCL. Interacts with TJP2/ZO2 (via N-terminus). Interacts with TJP1/ZO1 (via N-terminus). In terms of processing, sumoylated. Phosphorylation seems to contribute to the strength of cell-cell adhesion rather than to the basic capacity for cell-cell adhesion.

It localises to the cytoplasm. Its subcellular location is the cytoskeleton. The protein resides in the cell junction. It is found in the adherens junction. The protein localises to the cell membrane. It localises to the nucleus. Its function is as follows. Associates with the cytoplasmic domain of a variety of cadherins. The association of catenins to cadherins produces a complex which is linked to the actin filament network, and which seems to be of primary importance for cadherins cell-adhesion properties. Can associate with both E- and N-cadherins. Originally believed to be a stable component of E-cadherin/catenin adhesion complexes and to mediate the linkage of cadherins to the actin cytoskeleton at adherens junctions. In contrast, cortical actin was found to be much more dynamic than E-cadherin/catenin complexes and CTNNA1 was shown not to bind to F-actin when assembled in the complex suggesting a different linkage between actin and adherens junctions components. The homodimeric form may regulate actin filament assembly and inhibit actin branching by competing with the Arp2/3 complex for binding to actin filaments. Involved in the regulation of WWTR1/TAZ, YAP1 and TGFB1-dependent SMAD2 and SMAD3 nuclear accumulation. May play a crucial role in cell differentiation. The sequence is that of Catenin alpha-1 from Bos taurus (Bovine).